The following is a 313-amino-acid chain: MIIVTGGAGMIGSNIVKALNEAGINDILVVDNLKNGKKFKNLVDLDITDYMDRDDFLTQIMAGDDFGPIEAIFHEGACSATTEWDGKYMMLNNYEYSKELLHYCLDREIPFLYASSAATYGETETFVEEREYEGALNVYGYSKQQFDNYVRRLWKDAEEHGEQLSQITGFRYFNVYGPREDHKGSMASVAFHLNNQINAGENPKLFEGSGHFKRDFVYVGDVCKVNLWFLENGVSGIFNCGTGRAESFEEVAKAVVKHHNKGEIQTIPFPDHLKGAYQEFTQADLTKLRAAGCDVEFKTVAEGVAEYLTIQNS.

NADP(+) contacts are provided by residues 10-11 (MI), 31-32 (DN), Lys38, Arg53, 75-79 (EGACS), and Asn92. Residue Tyr139 is the Proton acceptor of the active site. Lys143 contributes to the NADP(+) binding site. A substrate-binding site is contributed by Asn174. The NADP(+) site is built by Val175 and Lys183. Lys183 serves as the catalytic Proton acceptor. Substrate contacts are provided by residues Ser185, His192, 206 to 209 (FEGS), Arg214, and Tyr277.

Belongs to the NAD(P)-dependent epimerase/dehydratase family. HldD subfamily. Homopentamer. NADP(+) is required as a cofactor.

The enzyme catalyses ADP-D-glycero-beta-D-manno-heptose = ADP-L-glycero-beta-D-manno-heptose. The protein operates within nucleotide-sugar biosynthesis; ADP-L-glycero-beta-D-manno-heptose biosynthesis; ADP-L-glycero-beta-D-manno-heptose from D-glycero-beta-D-manno-heptose 7-phosphate: step 4/4. Its pathway is bacterial outer membrane biogenesis; LPS core biosynthesis. In terms of biological role, catalyzes the interconversion between ADP-D-glycero-beta-D-manno-heptose and ADP-L-glycero-beta-D-manno-heptose via an epimerization at carbon 6 of the heptose. This is ADP-L-glycero-D-manno-heptose-6-epimerase from Vibrio parahaemolyticus serotype O3:K6 (strain RIMD 2210633).